The chain runs to 530 residues: T-complex protein 1 subunit zeta-2 (530 aa).

This sequence belongs to the TCP-1 chaperonin family. Component of the chaperonin-containing T-complex (TRiC), a heterooligomeric complex of about 850 to 900 kDa that forms two stacked rings, 12 to 16 nm in diameter. In terms of tissue distribution, testis-specific.

It is found in the cytoplasm. In terms of biological role, component of the chaperonin-containing T-complex (TRiC), a molecular chaperone complex that assists the folding of proteins upon ATP hydrolysis. This Homo sapiens (Human) protein is T-complex protein 1 subunit zeta-2 (CCT6B).